The chain runs to 555 residues: Glutamate--tRNA ligase (555 aa).

The 'HIGH' region signature appears at proline 100–histidine 110.

This sequence belongs to the class-I aminoacyl-tRNA synthetase family. Glutamate--tRNA ligase type 2 subfamily.

The protein localises to the cytoplasm. The catalysed reaction is tRNA(Glu) + L-glutamate + ATP = L-glutamyl-tRNA(Glu) + AMP + diphosphate. In terms of biological role, catalyzes the attachment of glutamate to tRNA(Glu) in a two-step reaction: glutamate is first activated by ATP to form Glu-AMP and then transferred to the acceptor end of tRNA(Glu). This Methanococcus maripaludis (strain C5 / ATCC BAA-1333) protein is Glutamate--tRNA ligase.